Here is a 43-residue protein sequence, read N- to C-terminus: Alpha-1-antiproteinase 4 (43 aa).

It belongs to the serpin family. In terms of processing, N-glycosylated with carbohydrates having biantennary side chains. As to expression, plasma.

The protein resides in the secreted. This Equus caballus (Horse) protein is Alpha-1-antiproteinase 4.